A 109-amino-acid polypeptide reads, in one-letter code: Nucleoid-associated protein LGAS_0369 (109 aa).

This sequence belongs to the YbaB/EbfC family. In terms of assembly, homodimer.

It is found in the cytoplasm. It localises to the nucleoid. Its function is as follows. Binds to DNA and alters its conformation. May be involved in regulation of gene expression, nucleoid organization and DNA protection. The protein is Nucleoid-associated protein LGAS_0369 of Lactobacillus gasseri (strain ATCC 33323 / DSM 20243 / BCRC 14619 / CIP 102991 / JCM 1131 / KCTC 3163 / NCIMB 11718 / NCTC 13722 / AM63).